A 434-amino-acid chain; its full sequence is CBL-interacting protein kinase 15 (434 aa).

A Protein kinase domain is found at 12–267 (YELGRLLGKG…IQKIKESTWF (256 aa)). ATP is bound by residues 18-26 (LGKGTFGKV) and Lys-41. The active-site Proton acceptor is Asp-135. The activation loop stretch occupies residues 153-182 (DFGLSALSESKRQDGLLHTTCGTPAYVAPE). The region spanning 298–333 (RKKNAHEDVKPMSVTNLNAFEIISFSKGFDLSGMFI) is the NAF domain. Positions 338–367 (RNEARFTSDKSASTIISKLEDVAKALNLRV) are PPI.

The protein belongs to the protein kinase superfamily. CAMK Ser/Thr protein kinase family. SNF1 subfamily. Mn(2+) serves as cofactor.

It catalyses the reaction L-seryl-[protein] + ATP = O-phospho-L-seryl-[protein] + ADP + H(+). The enzyme catalyses L-threonyl-[protein] + ATP = O-phospho-L-threonyl-[protein] + ADP + H(+). Its function is as follows. Involved in salt stress tolerance. CIPK serine-threonine protein kinases interact with CBL proteins. Binding of a CBL protein to the regulatory NAF domain of CIPK protein lead to the activation of the kinase in a calcium-dependent manner. The sequence is that of CBL-interacting protein kinase 15 (CIPK15) from Oryza sativa subsp. japonica (Rice).